Here is a 242-residue protein sequence, read N- to C-terminus: Histone-lysine N-methyltransferase set-1 (242 aa).

The segment at Met1–Lys61 is disordered. Low complexity predominate over residues Ser30–Ser43. The region spanning Arg104–Gly226 is the SET domain. Residues Lys114–Arg116, Tyr159, and Asn186–His187 contribute to the S-adenosyl-L-methionine site.

Belongs to the class V-like SAM-binding methyltransferase superfamily. Histone-lysine methyltransferase family. PR/SET subfamily. In embryos, it is expressed ubiquitously. In late embryos, it is expressed in hypodermal seam cells. In L3 and L4 larvae and thereafter, it is expressed in vulval precursor cells. In adult males, it is also expressed in 6 unidentified posterior cells.

The protein localises to the nucleus. Its subcellular location is the chromosome. It catalyses the reaction L-lysyl(20)-[histone H4] + S-adenosyl-L-methionine = N(6)-methyl-L-lysyl(20)-[histone H4] + S-adenosyl-L-homocysteine + H(+). In terms of biological role, histone methyltransferase that specifically monomethylates 'Lys-20' of histone H4 (H4K20me1). H4K20me1 is enriched on hermaphrodite X chromosomes and during mitosis. Involved in dosage compensation by repression of X-linked gene expression in hermaphrodites. Plays a role in growth and body fat regulation downstream of the TOR complex 2 pathway. The chain is Histone-lysine N-methyltransferase set-1 (set-1) from Caenorhabditis elegans.